A 360-amino-acid chain; its full sequence is Dual-specificity RNA methyltransferase RlmN (360 aa).

E91 (proton acceptor) is an active-site residue. Residues 110-343 (RSEKYTVCIS…CTIRESKGLD (234 aa)) form the Radical SAM core domain. C117 and C348 are oxidised to a cystine. Positions 124, 128, and 131 each coordinate [4Fe-4S] cluster. Residues 174-175 (GE), S206, 229-231 (SLH), and N305 each bind S-adenosyl-L-methionine. Catalysis depends on C348, which acts as the S-methylcysteine intermediate.

Belongs to the radical SAM superfamily. RlmN family. [4Fe-4S] cluster serves as cofactor.

The protein resides in the cytoplasm. The enzyme catalyses adenosine(2503) in 23S rRNA + 2 reduced [2Fe-2S]-[ferredoxin] + 2 S-adenosyl-L-methionine = 2-methyladenosine(2503) in 23S rRNA + 5'-deoxyadenosine + L-methionine + 2 oxidized [2Fe-2S]-[ferredoxin] + S-adenosyl-L-homocysteine. The catalysed reaction is adenosine(37) in tRNA + 2 reduced [2Fe-2S]-[ferredoxin] + 2 S-adenosyl-L-methionine = 2-methyladenosine(37) in tRNA + 5'-deoxyadenosine + L-methionine + 2 oxidized [2Fe-2S]-[ferredoxin] + S-adenosyl-L-homocysteine. In terms of biological role, specifically methylates position 2 of adenine 2503 in 23S rRNA and position 2 of adenine 37 in tRNAs. m2A2503 modification seems to play a crucial role in the proofreading step occurring at the peptidyl transferase center and thus would serve to optimize ribosomal fidelity. The protein is Dual-specificity RNA methyltransferase RlmN of Aliarcobacter butzleri (strain RM4018) (Arcobacter butzleri).